Reading from the N-terminus, the 305-residue chain is tRNA dimethylallyltransferase (305 aa).

Residue 8 to 15 (GPTASGKT) participates in ATP binding. A substrate-binding site is contributed by 10–15 (TASGKT). The segment at 33–36 (DSQQ) is interaction with substrate tRNA.

It belongs to the IPP transferase family. In terms of assembly, monomer. Requires Mg(2+) as cofactor.

It catalyses the reaction adenosine(37) in tRNA + dimethylallyl diphosphate = N(6)-dimethylallyladenosine(37) in tRNA + diphosphate. Catalyzes the transfer of a dimethylallyl group onto the adenine at position 37 in tRNAs that read codons beginning with uridine, leading to the formation of N6-(dimethylallyl)adenosine (i(6)A). This Anaeromyxobacter sp. (strain K) protein is tRNA dimethylallyltransferase.